Here is a 518-residue protein sequence, read N- to C-terminus: Cytochrome P450 3A27 (518 aa).

Cys-447 is a binding site for heme.

This sequence belongs to the cytochrome P450 family. Heme is required as a cofactor.

It is found in the endoplasmic reticulum membrane. It localises to the microsome membrane. It catalyses the reaction an organic molecule + reduced [NADPH--hemoprotein reductase] + O2 = an alcohol + oxidized [NADPH--hemoprotein reductase] + H2O + H(+). Functionally, cytochromes P450 are a group of heme-thiolate monooxygenases. In liver microsomes, this enzyme is involved in an NADPH-dependent electron transport pathway. It oxidizes a variety of structurally unrelated compounds, including steroids, fatty acids, and xenobiotics. This is Cytochrome P450 3A27 (cyp3a27) from Oncorhynchus mykiss (Rainbow trout).